Consider the following 473-residue polypeptide: Phosphatidylserine synthase 1 (473 aa).

At 1-35 the chain is on the cytoplasmic side; the sequence is MAACVGSRTLSKDDVNYRLHFRMINEQQVEDITLE. A helical membrane pass occupies residues 36-56; it reads FFYRPHTITLLSFTILSLMAF. Over 57-72 the chain is Lumenal; the sequence is AFTRDDSVPEENIWRG. The helical transmembrane segment at 73-93 threads the bilayer; that stretch reads ILSVIFFFLIISVLAFPNGPF. The Cytoplasmic portion of the chain corresponds to 94 to 102; that stretch reads TRPHPAIWR. Residues 103-123 traverse the membrane as a helical segment; it reads MVFGLSVLYFLFLVFVLFLNF. Topologically, residues 124 to 186 are lumenal; sequence EQVKAVMYWL…AMKALLIRSY (63 aa). Residues 187 to 207 traverse the membrane as a helical segment; the sequence is GLCWTISITWELTELFFMHLL. Residues 208-216 are Cytoplasmic-facing; sequence PNFAECWWD. The chain crosses the membrane as a helical span at residues 217 to 237; it reads QVILDILLCNGGGIWLGMVVC. At 238–286 the chain is on the lumenal side; it reads RFLEMRTYHWASFKDIHTTTGKIKRAVLQFTPASWTYVRWFDPKSSFQR. The chain crosses the membrane as a helical span at residues 287-307; it reads VAGIYLFMIIWQLTELNTFFL. The Cytoplasmic segment spans residues 308–319; that stretch reads KHIFVFQASHPL. A helical membrane pass occupies residues 320 to 342; sequence SWGRILFIGIITAPTVRQYYAYL. Residues 343–355 lie on the Lumenal side of the membrane; the sequence is TDTQCKRVGTQCW. The helical transmembrane segment at 356–376 threads the bilayer; that stretch reads VFGVIAFLEAIVCIKFGQDLF. The Cytoplasmic portion of the chain corresponds to 377–380; sequence SKTQ. A helical transmembrane segment spans residues 381–401; that stretch reads ILYVVFWLLCVAFTTFLCLYG. Residues 402 to 473 lie on the Lumenal side of the membrane; sequence MVWYAEYYGH…SKVTNGIGKK (72 aa). Positions 420 to 473 are disordered; sequence EDSPYSPDASWLHSKFSKGADNSPPKHPVNSESHSSRRRNRHSRSKVTNGIGKK. Basic residues predominate over residues 455–464; sequence SRRRNRHSRS.

This sequence belongs to the phosphatidyl serine synthase family.

The protein resides in the endoplasmic reticulum membrane. It catalyses the reaction a 1,2-diacyl-sn-glycero-3-phosphoethanolamine + L-serine = a 1,2-diacyl-sn-glycero-3-phospho-L-serine + ethanolamine. The catalysed reaction is a 1,2-diacyl-sn-glycero-3-phosphocholine + L-serine = a 1,2-diacyl-sn-glycero-3-phospho-L-serine + choline. Its pathway is phospholipid metabolism; phosphatidylserine biosynthesis. Catalyzes a base-exchange reaction in which the polar head group of phosphatidylethanolamine (PE) or phosphatidylcholine (PC) is replaced by L-serine. Catalyzes mainly the conversion of phosphatidylcholine but also converts, in vitro and to a lesser extent, phosphatidylethanolamine. The sequence is that of Phosphatidylserine synthase 1 (PTDSS1) from Gallus gallus (Chicken).